A 333-amino-acid chain; its full sequence is Probable cytosolic iron-sulfur protein assembly protein ciao1-B (333 aa).

WD repeat units lie at residues 14–53 (HPDS…WECK), 59–98 (GHQR…FECL), 103–142 (GHEN…EYEC), 148–187 (SHTQ…WECR), 192–231 (GHTS…GGQE), 246–285 (FHGR…DPDQ), and 297–333 (AHTQ…QSGV).

It belongs to the WD repeat CIA1 family. Component of the CIA complex.

Key component of the cytosolic iron-sulfur protein assembly (CIA) complex, a multiprotein complex that mediates the incorporation of iron-sulfur cluster into extramitochondrial Fe/S proteins. The chain is Probable cytosolic iron-sulfur protein assembly protein ciao1-B (ciao1b) from Salmo salar (Atlantic salmon).